The sequence spans 175 residues: Keratin-associated protein 13-2 (175 aa).

5 consecutive repeat copies span residues 46-55 (CQLGSSLYRG), 56-65 (CQEICWEPTS), 66-75 (CQTSYVESSP), 76-85 (CQTSCYRPRT), and 92-101 (CKTTYSGSLG). The segment at 46 to 101 (CQLGSSLYRGCQEICWEPTSCQTSYVESSPCQTSCYRPRTSLLCSPCKTTYSGSLG) is 5 X 10 AA approximate repeats.

The protein belongs to the PMG family. As to quaternary structure, interacts with hair keratins.

Functionally, in the hair cortex, hair keratin intermediate filaments are embedded in an interfilamentous matrix, consisting of hair keratin-associated proteins (KRTAP), which are essential for the formation of a rigid and resistant hair shaft through their extensive disulfide bond cross-linking with abundant cysteine residues of hair keratins. The matrix proteins include the high-sulfur and high-glycine-tyrosine keratins. The chain is Keratin-associated protein 13-2 (KRTAP13-2) from Homo sapiens (Human).